A 315-amino-acid chain; its full sequence is Putative HTH-type transcriptional regulatory protein PH1808 (315 aa).

Positions 131–189 (LKALREEHGYSITELAGILGISRKSLQRYEKGESVVSLEVALRLEEVFDEPLVKPIDVL) constitute an HTH cro/C1-type domain. Residues 142–161 (ITELAGILGISRKSLQRYEK) constitute a DNA-binding region (H-T-H motif).

In Pyrococcus horikoshii (strain ATCC 700860 / DSM 12428 / JCM 9974 / NBRC 100139 / OT-3), this protein is Putative HTH-type transcriptional regulatory protein PH1808.